A 122-amino-acid chain; its full sequence is Large ribosomal subunit protein uL14c (122 aa).

Belongs to the universal ribosomal protein uL14 family. In terms of assembly, part of the 50S ribosomal subunit.

It localises to the plastid. The protein localises to the chloroplast. Binds to 23S rRNA. This chain is Large ribosomal subunit protein uL14c, found in Gnetum parvifolium (Small-leaved jointfir).